The following is an 840-amino-acid chain: Cytosolic carboxypeptidase 2 (840 aa).

The region spanning 358-628 is the Peptidase M14 domain; it reads YPYTYTDLQC…HVCDTLLDFC (271 aa). Residues His424, Glu427, and His520 each coordinate Zn(2+). Catalysis depends on Glu592, which acts as the Proton donor/acceptor. Positions 706–719 are enriched in basic residues; that stretch reads MFKKKKKKSLQTRK. Disordered regions lie at residues 706–726 and 758–789; these read MFKK…EQYQ and ESSS…LDPS.

Belongs to the peptidase M14 family. Interacts with RARRES1, KIF11 and MAPRE1. It depends on Zn(2+) as a cofactor.

The protein localises to the cytoplasm. It is found in the cytosol. The protein resides in the cytoskeleton. It localises to the microtubule organizing center. Its subcellular location is the centrosome. The protein localises to the centriole. It is found in the cilium basal body. The catalysed reaction is (L-glutamyl)(n+1)-gamma-L-glutamyl-L-glutamyl-[protein] + H2O = (L-glutamyl)(n)-gamma-L-glutamyl-L-glutamyl-[protein] + L-glutamate. With respect to regulation, inhibited by RARRES1. Metallocarboxypeptidase that mediates deglutamylation of tubulin and non-tubulin target proteins. Catalyzes the removal of polyglutamate side chains present on the gamma-carboxyl group of glutamate residues within the C-terminal tail of tubulin protein. Specifically cleaves tubulin long-side-chains, while it is not able to remove the branching point glutamate. Also catalyzes the removal of polyglutamate residues from the carboxy-terminus of non-tubulin proteins such as MYLK. In Macaca fascicularis (Crab-eating macaque), this protein is Cytosolic carboxypeptidase 2 (AGBL2).